The sequence spans 90 residues: Probable Fe(2+)-trafficking protein (90 aa).

It belongs to the Fe(2+)-trafficking protein family.

Could be a mediator in iron transactions between iron acquisition and iron-requiring processes, such as synthesis and/or repair of Fe-S clusters in biosynthetic enzymes. In Vibrio vulnificus (strain CMCP6), this protein is Probable Fe(2+)-trafficking protein.